Reading from the N-terminus, the 659-residue chain is Protein SCARECROW 1 (659 aa).

2 disordered regions span residues 1–33 (MGSS…ITSL) and 188–285 (SDPA…KQRD). Over residues 190-228 (PAPPPPPPPSHPALLPPDATAPPPPPTSVAALPPPPPPQ) the composition is skewed to pro residues. The segment covering 258–271 (AAAAAAAAAAALAA) has biased composition (low complexity). The stretch at 258–289 (AAAAAAAAAAALAAAKERKEEQRRKQRDEEGL) forms a coiled coil. The segment covering 272-285 (AKERKEEQRRKQRD) has biased composition (basic and acidic residues). The 371-residue stretch at 282–652 (KQRDEEGLHL…LCLLTASAWR (371 aa)) folds into the GRAS domain. The segment at 289 to 353 (LHLLTLLLQC…VSSCLGLYAP (65 aa)) is leucine repeat I (LRI). The LxCxE motif motif lies at 296-300 (LQCAE). Residues 372–437 (FQVFNGISPF…GGPPRVRLTG (66 aa)) form a VHIID region. A VHIID motif is present at residues 403–407 (VHIID). Residues 447-479 (ATGKRLSDFADTLGLPFEFCPVADKAGNLDPEK) form a leucine repeat II (LRII) region. Positions 488 to 575 (VAVHWLRHSL…QQLLSREIRN (88 aa)) are PFYRE. The segment at 578–652 (AVGGPARTGD…LCLLTASAWR (75 aa)) is SAW.

It belongs to the GRAS family. Interacts with SHR1, but not with SHR2.

The protein localises to the nucleus. In terms of biological role, transcription factor required for quiescent center cells specification and maintenance of surrounding stem cells, and for the asymmetric cell division involved in radial pattern formation in roots. Essential for cell division but not differentiation of the ground tissue. Regulates the radial organization of the shoot axial organs. Restricts SHR movment and sequesters it into the nucleus of the endodermis. The chain is Protein SCARECROW 1 (SCR1) from Oryza sativa subsp. indica (Rice).